The sequence spans 230 residues: MSEIKDIVVQGLWKNNSALVQLLGLCPLLAVTSTATNALGLGLATTLVLTLTNLTVSALRRWTPAEIRIPIYVMIIASVVSAVQMLINAYAFGLYQSLGIFIPLIVTNCIVVGRAEAFAAKKGPWLSALDGFSIGMGATGAMFVLGSLREILGNGTLFDGADSLLGGWAKVLRVEIFHTDSPFLLAMLPPGAFIGLGLMLAVKYLIDEKMKKRRAETAPSAVPAGETGKV.

6 helical membrane passes run 18–38 (ALVQ…ATNA), 39–59 (LGLG…VSAL), 63–83 (TPAE…VSAV), 86–106 (LINA…PLIV), 125–145 (WLSA…MFVL), and 182–202 (PFLL…MLAV).

It belongs to the NqrDE/RnfAE family. In terms of assembly, the complex is composed of six subunits: RsxA, RsxB, RsxC, RsxD, RsxE and RsxG.

Its subcellular location is the cell inner membrane. In terms of biological role, part of a membrane-bound complex that couples electron transfer with translocation of ions across the membrane. Required to maintain the reduced state of SoxR. In Salmonella agona (strain SL483), this protein is Ion-translocating oxidoreductase complex subunit E.